We begin with the raw amino-acid sequence, 346 residues long: MASAETPNPDAEIPNTDAAAAADPAAAAPAAAATDPAAAGSPSPPLPPRKRRLSPTPSPTRRSSRSRSRSPRRGRSRSRSRSRSRGRSASPRYPDGKRRRHNDLNVEVCRDFLRDRCARADIECKYAHPHPTVAVDRDSKVTACADSLRNNCFRGRTCRYYHPPPHIQESLLRSIGVEDPKVKMQVCRDFTRGRCSRSANECRFLHHSPLEDCAIVCQDFLRGRCDRKSCRYSHVMAHPMPPPMRDIPMQYPDMVYMPPPAPLGVPMMMPPPSAPAAFSGNNYGVEVCRDYLKNMCNRESCRFAHPDLNNEVMNTQVEVCRDFKRGECNRPACRFYHPPASSNSIG.

The disordered stretch occupies residues 1 to 99; that stretch reads MASAETPNPD…SPRYPDGKRR (99 aa). A compositionally biased stretch (low complexity) spans 17–41; sequence DAAAAADPAAAAPAAAATDPAAAGS. A compositionally biased stretch (basic residues) spans 62 to 86; sequence RSSRSRSRSPRRGRSRSRSRSRSRG. 6 consecutive C3H1-type zinc fingers follow at residues 103–131, 138–165, 181–209, 211–237, 282–308, and 314–340; these read DLNV…HPHP, DSKV…HPPP, KVKM…HHSP, EDCA…HVMA, NYGV…HPDL, and NTQV…HPPA.

The chain is Zinc finger CCCH domain-containing protein 28 from Oryza sativa subsp. japonica (Rice).